A 447-amino-acid chain; its full sequence is GTPase Der (447 aa).

2 consecutive EngA-type G domains span residues 3–167 (PVIA…ALPE) and 180–353 (IRLA…KSAN). GTP is bound by residues 9–16 (GRPNVGKS), 56–60 (DTGGF), 119–122 (NKAE), 186–193 (GRPNVGKS), 233–237 (DTAGL), and 298–301 (NKWD). In terms of domain architecture, KH-like spans 354-438 (RKMPTPVLTR…PLRIEMKTSS (85 aa)).

The protein belongs to the TRAFAC class TrmE-Era-EngA-EngB-Septin-like GTPase superfamily. EngA (Der) GTPase family. As to quaternary structure, associates with the 50S ribosomal subunit.

Functionally, GTPase that plays an essential role in the late steps of ribosome biogenesis. This is GTPase Der from Acidovorax ebreus (strain TPSY) (Diaphorobacter sp. (strain TPSY)).